Here is a 369-residue protein sequence, read N- to C-terminus: Chaperone protein DnaJ (369 aa).

One can recognise a J domain in the interval 3–67; it reads DHYEVLGVER…QQRQQYDRGG (65 aa). The CR-type zinc finger occupies 123–205; sequence GAHRDLEVDT…CQGQGRVRAR (83 aa). Zn(2+) contacts are provided by C136, C139, C153, C156, C179, C182, C193, and C196. CXXCXGXG motif repeat units lie at residues 136 to 143, 153 to 160, 179 to 186, and 193 to 200; these read CETCDGSC, CDICHGTG, CGSCRGYG, and CVTCQGQG.

This sequence belongs to the DnaJ family. In terms of assembly, homodimer. The cofactor is Zn(2+).

Its subcellular location is the cytoplasm. Functionally, participates actively in the response to hyperosmotic and heat shock by preventing the aggregation of stress-denatured proteins and by disaggregating proteins, also in an autonomous, DnaK-independent fashion. Unfolded proteins bind initially to DnaJ; upon interaction with the DnaJ-bound protein, DnaK hydrolyzes its bound ATP, resulting in the formation of a stable complex. GrpE releases ADP from DnaK; ATP binding to DnaK triggers the release of the substrate protein, thus completing the reaction cycle. Several rounds of ATP-dependent interactions between DnaJ, DnaK and GrpE are required for fully efficient folding. Also involved, together with DnaK and GrpE, in the DNA replication of plasmids through activation of initiation proteins. This is Chaperone protein DnaJ from Leifsonia xyli subsp. xyli (strain CTCB07).